A 382-amino-acid chain; its full sequence is Mannitol-1-phosphate 5-dehydrogenase (382 aa).

4–15 (AVHFGAGNIGRG) is a binding site for NAD(+).

It belongs to the mannitol dehydrogenase family.

It carries out the reaction D-mannitol 1-phosphate + NAD(+) = beta-D-fructose 6-phosphate + NADH + H(+). This Vibrio campbellii (strain ATCC BAA-1116) protein is Mannitol-1-phosphate 5-dehydrogenase.